We begin with the raw amino-acid sequence, 325 residues long: Gamma-hemolysin component B (325 aa).

The N-terminal stretch at 1 to 26 is a signal peptide; sequence MKMNKLVKSSVATSMALLLLSGTANA.

This sequence belongs to the aerolysin family. Toxicity requires sequential binding and synergistic association of a class S and a class F component which form heterooligomeric complexes. HlgB (class F) associates with either hlgA thus forming an AB toxin or with hlgC thus forming a CB toxin. Interacts with host AMFR.

The protein localises to the secreted. In terms of biological role, toxin that seems to act by forming pores in the membrane of the cell. Has a hemolytic and a leucotoxic activity. Promotes host AMFR-mediated inflammation by mediating 'Lys-27'-linked ubiquitination of TAB3, TAK1-TAB3 complex formation and phosphorylation of TAK1/MAP3K7. In turn, activates host NF-kappa-B signaling pathway. The sequence is that of Gamma-hemolysin component B (hlgB) from Staphylococcus aureus (strain NCTC 8325 / PS 47).